The chain runs to 298 residues: MSETIRVATRSSRLAIIQTREVIELLERESPRDVEVEIVKTKSRGDVVRDRPLHKLGEKGVFVKEVDRLVLEGKADIAVHSAKDVPSVVDYPVDVAAVPPRRDPRECLVSRHGGLKELPRGATVGTSSPRRRAQILLERPDLKVEPMRGNVDTRVSKVRRREYDAAVLAKVGLDRLGMTSEVSEVYDPEEFVPPAGQGALMITCRKDDDRVKRLLEVVDDEKSRVEVETEKAVVRELGVGCSEPVGVHVRARDGDHVRLVLGLFEEDGSCGHVLKMRGSPEDVVREAVSQAREVLSDG.

S-(dipyrrolylmethanemethyl)cysteine is present on Cys-241.

It belongs to the HMBS family. Dipyrromethane serves as cofactor.

It catalyses the reaction 4 porphobilinogen + H2O = hydroxymethylbilane + 4 NH4(+). It functions in the pathway porphyrin-containing compound metabolism; protoporphyrin-IX biosynthesis; coproporphyrinogen-III from 5-aminolevulinate: step 2/4. Its function is as follows. Tetrapolymerization of the monopyrrole PBG into the hydroxymethylbilane pre-uroporphyrinogen in several discrete steps. The polypeptide is Probable porphobilinogen deaminase (Methanopyrus kandleri (strain AV19 / DSM 6324 / JCM 9639 / NBRC 100938)).